The following is a 499-amino-acid chain: MAHDLLFRLFPLLALGVPLQSNRLGPTSRLRYSRFLDPSNVIFLRWDFDLEAEIISFELQVRTAGWVGFGVTNRYTNVGSDLVVGGVLPNGNVYFSDQHLVEEDTLKEDGSQDAELLGLTEDAVYTTMHFSRPFRSCDPHDLDITSNTVRVLAAYGLDDTLKLYRERTFVKSIFLLQVVHPDDLDVPEDTIIHDLEITNFLIPEDDTTYACTFLPLPIVSEKHHIYKFEPKLVYHNETTVHHILVYACGNASVLPTGISDCYGADPAFSLCSQVIVGSAVGGTSYQFPDDVGVSIGTPLDPQWILEIHYSNFNNLPGVYDSSGIRVYYTSQLCKYDTDVLQLGFFTFPIHFIPPGAESFMSYGLCRTEKFEEMNGAPMPDIQVYGYLLHTHLAGRALQAVQYRNGTQLRKICKDDSYDFNLQETRDLPSRVEIKPGDELLVECHYQTLDRDSMTFGGPSTINEMCLIFLFYYPQNNISSCMGYPDIIYVAHELGEEASE.

An N-terminal signal peptide occupies residues 1-16; that stretch reads MAHDLLFRLFPLLALG. One can recognise a DOMON domain in the interval 40–156; sequence NVIFLRWDFD…NTVRVLAAYG (117 aa). Tyrosine 209 is a catalytic residue. Cystine bridges form between cysteine 211–cysteine 261 and cysteine 248–cysteine 271. Asparagine 236 carries N-linked (GlcNAc...) asparagine glycosylation. Residues histidine 241 and histidine 242 each contribute to the Cu cation site. Residue asparagine 250 is glycosylated (N-linked (GlcNAc...) asparagine). Cu cation is bound by residues histidine 308, histidine 389, and histidine 391. Disulfide bonds link cysteine 365–cysteine 480 and cysteine 443–cysteine 465. Histidine 389 is a catalytic residue. An N-linked (GlcNAc...) asparagine glycan is attached at asparagine 404. Methionine 464 contacts Cu cation. An N-linked (GlcNAc...) asparagine glycan is attached at asparagine 476.

This sequence belongs to the copper type II ascorbate-dependent monooxygenase family. The cofactor is Cu(2+).

This Homo sapiens (Human) protein is Putative DBH-like monooxygenase protein 2 (MOXD2P).